Reading from the N-terminus, the 309-residue chain is Protein FdhE homolog (309 aa).

This sequence belongs to the FdhE family.

Its subcellular location is the cytoplasm. Necessary for formate dehydrogenase activity. The protein is Protein FdhE homolog of Yersinia enterocolitica serotype O:8 / biotype 1B (strain NCTC 13174 / 8081).